A 585-amino-acid polypeptide reads, in one-letter code: MSALSTKLEPTNSYSESLPPQRRSPLEAEGRYRWNRGNYSITRRRIDIWGFVLTLLYQFWLNGKKWSYAGGYTEEKLQQRRRRQAKWIRENLLSLGPTFIKVGQLFSTRSDLFPAEYVEELSKLQDEVPAFSYEQAAGIIEEELGKPIAKLYRSFDPVPLAAASLGQVHKAQLHTGEDVVVKVQRPGLKKLFTIDLAILKKIAQYFQNHPKWGRGRDWNGIYEECCKILWQETDYLREGRSADTFRRNFRGEDWVKVPRVYWRYTSTQILTLEYLPGIKISHYDALEAAGLERKELAQLGARAYLFQLLNHGFFHADPHPGNLAVSPEAGELIFYDFGMMGEITPDTKNKLMDTLFGVAEKNAERIVNSLVALGALKETEDMGPIRRSVQFLLDNFMDKPFEEQSITKISDDLYEIAYDQPFRFPATFTFVMRAFSTLEGVGKGLDPDFNFMAVAQPFALQIMNNSNGFNPAGNIMDELGRQAVQVGNSALGLPRRIEDSLDRLDRGDIRVRVRSTETDRLLRRMGTMQMGTNYVLFTCALVLSATLLFVNNYFMAAAVVLLMSLVPAFALWRLLKRLERQDRMF.

Residues 1-18 (MSALSTKLEPTNSYSESL) show a composition bias toward polar residues. The interval 1–23 (MSALSTKLEPTNSYSESLPPQRR) is disordered.

The protein belongs to the protein kinase superfamily. ADCK protein kinase family.

This is an uncharacterized protein from Synechocystis sp. (strain ATCC 27184 / PCC 6803 / Kazusa).